Consider the following 176-residue polypeptide: HTH-type transcriptional regulator DctR (176 aa).

The HTH luxR-type domain occupies V109–Y174. The H-T-H motif DNA-binding region spans T133–H152.

May act as a transcriptional regulator of dctA. The polypeptide is HTH-type transcriptional regulator DctR (dctR) (Escherichia coli (strain K12)).